The sequence spans 227 residues: 2,3-bisphosphoglycerate-dependent phosphoglycerate mutase (227 aa).

Substrate contacts are provided by residues 7–14, 20–21, R59, 86–89, K97, 113–114, and 182–183; these read RHGQSEWN, TG, ERHY, RR, and GN. The active-site Tele-phosphohistidine intermediate is the H8. Residue E86 is the Proton donor/acceptor of the active site.

The protein belongs to the phosphoglycerate mutase family. BPG-dependent PGAM subfamily. As to quaternary structure, homodimer.

The catalysed reaction is (2R)-2-phosphoglycerate = (2R)-3-phosphoglycerate. The protein operates within carbohydrate degradation; glycolysis; pyruvate from D-glyceraldehyde 3-phosphate: step 3/5. Catalyzes the interconversion of 2-phosphoglycerate and 3-phosphoglycerate. The protein is 2,3-bisphosphoglycerate-dependent phosphoglycerate mutase of Neisseria meningitidis serogroup B (strain ATCC BAA-335 / MC58).